A 335-amino-acid chain; its full sequence is Interleukin-12 subunit beta (335 aa).

Positions 1–22 (MCPQKLTISWFAIVLLVSPLMA) are cleaved as a signal peptide. The Ig-like C2-type domain maps to 23–106 (MWELEKDVYV…LSHSHLLLHK (84 aa)). A glycan (N-linked (GlcNAc...) asparagine) is linked at Asn-47. Cysteines 50 and 90 form a disulfide. 3 N-linked (GlcNAc...) asparagine glycosylation sites follow: Asn-122, Asn-132, and Asn-220. Residues 233-324 (PDPPKNLQMK…QDRYYNSSCS (92 aa)) enclose the Fibronectin type-III domain.

This sequence belongs to the IL-12B family. Heterodimer with IL12A; disulfide-linked. The heterodimer is known as interleukin IL-12. Heterodimer with IL23A; disulfide-linked. The heterodimer is known as interleukin IL-23. Also secreted as a monomer. Interacts with NBR1; this interaction promotes IL-12 secretion.

The protein localises to the secreted. In terms of biological role, cytokine that can act as a growth factor for activated T and NK cells, enhance the lytic activity of NK/lymphokine-activated killer cells, and stimulate the production of IFN-gamma by resting PBMC. Functionally, associates with IL23A to form the IL-23 interleukin, a heterodimeric cytokine which functions in innate and adaptive immunity. IL-23 may constitute with IL-17 an acute response to infection in peripheral tissues. IL-23 binds to a heterodimeric receptor complex composed of IL12RB1 and IL23R, activates the Jak-Stat signaling cascade, stimulates memory rather than naive T-cells and promotes production of pro-inflammatory cytokines. IL-23 induces autoimmune inflammation and thus may be responsible for autoimmune inflammatory diseases and may be important for tumorigenesis. In Mus musculus (Mouse), this protein is Interleukin-12 subunit beta (Il12b).